The following is a 222-amino-acid chain: MNIAKYIDHTLLKADATKQDIKKICDEAREQGFYSVCVNGANVAYAHSLLTGTDVKVAAVVGFPLGAMTTEAKVFETSDVIAKGAQEIDMVINIAALKEGNDAEIIKDIKAVVDIANGKAIVKVIIEACLLSQEEKIRACQLAKEAGAHFVKTSTGFSTGGATVEDIKLMRETVGPEIGVKGSGGIRDLKTALAMIEAGATRIGASASVSIVNDEKDNTAGY.

Aspartate 89 (proton donor/acceptor) is an active-site residue. Lysine 152 serves as the catalytic Schiff-base intermediate with acetaldehyde. The Proton donor/acceptor role is filled by lysine 181.

The protein belongs to the DeoC/FbaB aldolase family. DeoC type 1 subfamily.

The protein resides in the cytoplasm. It carries out the reaction 2-deoxy-D-ribose 5-phosphate = D-glyceraldehyde 3-phosphate + acetaldehyde. It participates in carbohydrate degradation; 2-deoxy-D-ribose 1-phosphate degradation; D-glyceraldehyde 3-phosphate and acetaldehyde from 2-deoxy-alpha-D-ribose 1-phosphate: step 2/2. In terms of biological role, catalyzes a reversible aldol reaction between acetaldehyde and D-glyceraldehyde 3-phosphate to generate 2-deoxy-D-ribose 5-phosphate. The protein is Deoxyribose-phosphate aldolase of Alkaliphilus oremlandii (strain OhILAs) (Clostridium oremlandii (strain OhILAs)).